The chain runs to 85 residues: Translation initiation factor IF-1 2 (85 aa).

The S1-like domain occupies 1 to 72 (MAKEELIEMH…SKGRITFRHI (72 aa)).

Belongs to the IF-1 family. As to quaternary structure, component of the 30S ribosomal translation pre-initiation complex which assembles on the 30S ribosome in the order IF-2 and IF-3, IF-1 and N-formylmethionyl-tRNA(fMet); mRNA recruitment can occur at any time during PIC assembly.

It localises to the cytoplasm. Its function is as follows. One of the essential components for the initiation of protein synthesis. Stabilizes the binding of IF-2 and IF-3 on the 30S subunit to which N-formylmethionyl-tRNA(fMet) subsequently binds. Helps modulate mRNA selection, yielding the 30S pre-initiation complex (PIC). Upon addition of the 50S ribosomal subunit IF-1, IF-2 and IF-3 are released leaving the mature 70S translation initiation complex. The protein is Translation initiation factor IF-1 2 of Polaromonas sp. (strain JS666 / ATCC BAA-500).